A 119-amino-acid polypeptide reads, in one-letter code: ATP-dependent Clp protease adapter protein ClpS (119 aa).

The protein belongs to the ClpS family. As to quaternary structure, binds to the N-terminal domain of the chaperone ClpA.

Functionally, involved in the modulation of the specificity of the ClpAP-mediated ATP-dependent protein degradation. This Marinobacter nauticus (strain ATCC 700491 / DSM 11845 / VT8) (Marinobacter aquaeolei) protein is ATP-dependent Clp protease adapter protein ClpS.